Reading from the N-terminus, the 111-residue chain is UPF0339 protein in ptx operon 5'region (111 aa).

2 consecutive repeat copies span residues 10 to 58 and 61 to 109.

This sequence belongs to the UPF0339 family. Duplicated subfamily.

This chain is UPF0339 protein in ptx operon 5'region, found in Stutzerimonas stutzeri (Pseudomonas stutzeri).